The sequence spans 36 residues: Phosphoglycerate kinase, chloroplastic (36 aa).

Positions 22, 23, and 25 each coordinate (2R)-3-phosphoglycerate.

Belongs to the phosphoglycerate kinase family. Monomer. Mg(2+) serves as cofactor.

It is found in the plastid. Its subcellular location is the chloroplast. It carries out the reaction (2R)-3-phosphoglycerate + ATP = (2R)-3-phospho-glyceroyl phosphate + ADP. It functions in the pathway carbohydrate biosynthesis; Calvin cycle. The polypeptide is Phosphoglycerate kinase, chloroplastic (Scenedesmus fuscus (Green alga)).